A 149-amino-acid polypeptide reads, in one-letter code: Large ribosomal subunit protein eL19 (149 aa).

The tract at residues 45 to 130 is disordered; it reads VDEGAIQAKD…RDLYDKAGGG (86 aa). Residues 58–85 are compositionally biased toward basic residues; that stretch reads NSRGRARERQKKRAYGHQKGAGSRKGKA. Residues 90–113 show a composition bias toward basic and acidic residues; sequence NSKEDWESRIRAQRTKLRELRDEG.

It belongs to the eukaryotic ribosomal protein eL19 family. As to quaternary structure, part of the 50S ribosomal subunit.

In terms of biological role, binds to the 23S rRNA. Located at the polypeptide exit tunnel on the outside of the subunit. The protein is Large ribosomal subunit protein eL19 of Haloarcula marismortui (strain ATCC 43049 / DSM 3752 / JCM 8966 / VKM B-1809) (Halobacterium marismortui).